We begin with the raw amino-acid sequence, 292 residues long: 4-hydroxy-tetrahydrodipicolinate synthase (292 aa).

Residue T44 coordinates pyruvate. Y132 serves as the catalytic Proton donor/acceptor. K160 (schiff-base intermediate with substrate) is an active-site residue. I202 provides a ligand contact to pyruvate.

Belongs to the DapA family. As to quaternary structure, homotetramer; dimer of dimers.

Its subcellular location is the cytoplasm. It carries out the reaction L-aspartate 4-semialdehyde + pyruvate = (2S,4S)-4-hydroxy-2,3,4,5-tetrahydrodipicolinate + H2O + H(+). Its pathway is amino-acid biosynthesis; L-lysine biosynthesis via DAP pathway; (S)-tetrahydrodipicolinate from L-aspartate: step 3/4. Functionally, catalyzes the condensation of (S)-aspartate-beta-semialdehyde [(S)-ASA] and pyruvate to 4-hydroxy-tetrahydrodipicolinate (HTPA). The polypeptide is 4-hydroxy-tetrahydrodipicolinate synthase (Magnetococcus marinus (strain ATCC BAA-1437 / JCM 17883 / MC-1)).